A 588-amino-acid chain; its full sequence is 2-isopropylmalate synthase (588 aa).

The 275-residue stretch at 40–314 folds into the Pyruvate carboxyltransferase domain; it reads PRWCAVDLRD…DPQIDFSDLD (275 aa). Residues D49, H253, H255, and N289 each coordinate Mg(2+). Residues 456-588 are regulatory domain; sequence APLDRVEEKW…TVREPELAAV (133 aa).

It belongs to the alpha-IPM synthase/homocitrate synthase family. LeuA type 2 subfamily. Homodimer. Mg(2+) serves as cofactor.

Its subcellular location is the cytoplasm. The catalysed reaction is 3-methyl-2-oxobutanoate + acetyl-CoA + H2O = (2S)-2-isopropylmalate + CoA + H(+). The protein operates within amino-acid biosynthesis; L-leucine biosynthesis; L-leucine from 3-methyl-2-oxobutanoate: step 1/4. Its function is as follows. Catalyzes the condensation of the acetyl group of acetyl-CoA with 3-methyl-2-oxobutanoate (2-ketoisovalerate) to form 3-carboxy-3-hydroxy-4-methylpentanoate (2-isopropylmalate). This is 2-isopropylmalate synthase from Clavibacter michiganensis subsp. michiganensis (strain NCPPB 382).